A 151-amino-acid chain; its full sequence is Large ribosomal subunit protein bL9 (151 aa).

The protein belongs to the bacterial ribosomal protein bL9 family.

In terms of biological role, binds to the 23S rRNA. The protein is Large ribosomal subunit protein bL9 of Desulforapulum autotrophicum (strain ATCC 43914 / DSM 3382 / VKM B-1955 / HRM2) (Desulfobacterium autotrophicum).